The sequence spans 129 residues: M-zodatoxin-Lt8d (129 aa).

Residues 1 to 20 (MKYFVVALALVAAFACIAES) form the signal peptide. Residues 21-60 (KPAESEHELAEVEEENELADLEDAVWLEHLADLSDLEEAR) constitute a propeptide that is removed on maturation. A Processing quadruplet motif motif is present at residues 57–60 (EEAR).

In terms of processing, cleavage of the propeptide depends on the processing quadruplet motif (XXXR, with at least one of X being E). In terms of tissue distribution, expressed by the venom gland.

Its subcellular location is the secreted. Functionally, insecticidal, cytolytic and antimicrobial peptide. Forms voltage-dependent, ion-permeable channels in membranes. At high concentration causes cell membrane lysis. This chain is M-zodatoxin-Lt8d (cit 1-4), found in Lachesana tarabaevi (Spider).